Consider the following 388-residue polypeptide: Succinate--CoA ligase [ADP-forming] subunit beta (388 aa).

The ATP-grasp domain occupies 9 to 245 (KELLASYGLP…KSQENERELK (237 aa)). ATP-binding positions include lysine 46, 53–55 (GRG), glutamate 100, tyrosine 103, and glutamate 108. Residues asparagine 200 and aspartate 214 each contribute to the Mg(2+) site. Substrate is bound by residues asparagine 265 and 322–324 (GIV).

This sequence belongs to the succinate/malate CoA ligase beta subunit family. Heterotetramer of two alpha and two beta subunits. It depends on Mg(2+) as a cofactor.

It catalyses the reaction succinate + ATP + CoA = succinyl-CoA + ADP + phosphate. The enzyme catalyses GTP + succinate + CoA = succinyl-CoA + GDP + phosphate. It participates in carbohydrate metabolism; tricarboxylic acid cycle; succinate from succinyl-CoA (ligase route): step 1/1. Succinyl-CoA synthetase functions in the citric acid cycle (TCA), coupling the hydrolysis of succinyl-CoA to the synthesis of either ATP or GTP and thus represents the only step of substrate-level phosphorylation in the TCA. The beta subunit provides nucleotide specificity of the enzyme and binds the substrate succinate, while the binding sites for coenzyme A and phosphate are found in the alpha subunit. This Neisseria gonorrhoeae (strain NCCP11945) protein is Succinate--CoA ligase [ADP-forming] subunit beta.